The chain runs to 422 residues: Light-independent protochlorophyllide reductase subunit N (422 aa).

[4Fe-4S] cluster contacts are provided by Cys26, Cys51, and Cys112.

This sequence belongs to the BchN/ChlN family. Protochlorophyllide reductase is composed of three subunits; BchL, BchN and BchB. Forms a heterotetramer of two BchB and two BchN subunits. It depends on [4Fe-4S] cluster as a cofactor.

The catalysed reaction is chlorophyllide a + oxidized 2[4Fe-4S]-[ferredoxin] + 2 ADP + 2 phosphate = protochlorophyllide a + reduced 2[4Fe-4S]-[ferredoxin] + 2 ATP + 2 H2O. Its pathway is porphyrin-containing compound metabolism; bacteriochlorophyll biosynthesis (light-independent). Functionally, component of the dark-operative protochlorophyllide reductase (DPOR) that uses Mg-ATP and reduced ferredoxin to reduce ring D of protochlorophyllide (Pchlide) to form chlorophyllide a (Chlide). This reaction is light-independent. The NB-protein (BchN-BchB) is the catalytic component of the complex. In Acidiphilium rubrum, this protein is Light-independent protochlorophyllide reductase subunit N.